A 324-amino-acid chain; its full sequence is Phospho-N-acetylmuramoyl-pentapeptide-transferase (324 aa).

A run of 10 helical transmembrane segments spans residues 5–25 (GLLV…PLFI), 52–72 (PTMG…IMAI), 77–97 (LGAE…IGFL), 122–142 (VIAI…YIMI), 149–169 (FELG…GSNA), 176–196 (LDGL…IIAV), 201–221 (FGVA…LVFN), 227–247 (VFMG…VAIL), 253–273 (LLVI…IQVI), and 302–322 (VVVT…YIGV).

The protein belongs to the glycosyltransferase 4 family. MraY subfamily. The cofactor is Mg(2+).

The protein localises to the cell membrane. The enzyme catalyses UDP-N-acetyl-alpha-D-muramoyl-L-alanyl-gamma-D-glutamyl-meso-2,6-diaminopimeloyl-D-alanyl-D-alanine + di-trans,octa-cis-undecaprenyl phosphate = di-trans,octa-cis-undecaprenyl diphospho-N-acetyl-alpha-D-muramoyl-L-alanyl-D-glutamyl-meso-2,6-diaminopimeloyl-D-alanyl-D-alanine + UMP. Its pathway is cell wall biogenesis; peptidoglycan biosynthesis. Its function is as follows. Catalyzes the initial step of the lipid cycle reactions in the biosynthesis of the cell wall peptidoglycan: transfers peptidoglycan precursor phospho-MurNAc-pentapeptide from UDP-MurNAc-pentapeptide onto the lipid carrier undecaprenyl phosphate, yielding undecaprenyl-pyrophosphoryl-MurNAc-pentapeptide, known as lipid I. This is Phospho-N-acetylmuramoyl-pentapeptide-transferase from Bacillus anthracis.